The following is a 637-amino-acid chain: tRNA uridine 5-carboxymethylaminomethyl modification enzyme MnmG (637 aa).

FAD-binding positions include 15-20 (GAGHAG), Ile-127, and Ser-182. 276–290 (GPRYCPSIEDKIVRF) is a binding site for NAD(+). FAD is bound at residue Gln-373.

The protein belongs to the MnmG family. In terms of assembly, homodimer. Heterotetramer of two MnmE and two MnmG subunits. Requires FAD as cofactor.

The protein resides in the cytoplasm. Functionally, NAD-binding protein involved in the addition of a carboxymethylaminomethyl (cmnm) group at the wobble position (U34) of certain tRNAs, forming tRNA-cmnm(5)s(2)U34. The polypeptide is tRNA uridine 5-carboxymethylaminomethyl modification enzyme MnmG (Streptococcus pneumoniae (strain ATCC BAA-255 / R6)).